The sequence spans 147 residues: 3-dehydroquinate dehydratase (147 aa).

The Proton acceptor role is filled by Tyr24. Residues Asn75, His81, and Asp88 each coordinate substrate. His101 (proton donor) is an active-site residue. Residues 102 to 103 (IS) and Arg112 contribute to the substrate site.

It belongs to the type-II 3-dehydroquinase family. In terms of assembly, homododecamer.

The enzyme catalyses 3-dehydroquinate = 3-dehydroshikimate + H2O. Its pathway is metabolic intermediate biosynthesis; chorismate biosynthesis; chorismate from D-erythrose 4-phosphate and phosphoenolpyruvate: step 3/7. Catalyzes a trans-dehydration via an enolate intermediate. The protein is 3-dehydroquinate dehydratase of Cereibacter sphaeroides (strain KD131 / KCTC 12085) (Rhodobacter sphaeroides).